Reading from the N-terminus, the 316-residue chain is MANLKEIRDRIVSVKNTRKITEAMRLVAAAKVRRAQEQVLRSRPFADRLARVLENIQSRMKFEAADSPLLKARAVQKVTLLAVTGDRGLCGGYNTNVIKRTEQRYGELSSQGFEIDLVLIGRKAITYFQNRSSQYKIRASFQDLEQVPTSKDAEEATSEVLSEFLSESTDRVEIIYTKFISLVSCDPVVQTLLPLDPQGIAKEDDEIFRITTKGSRFVIEKDPAPANEEPVLPSDVVFEQSPDQLLNSLLPLYLQNQLLRALQEAAASELASRMTAMNNASDNAKELAKTLNLTYNKARQAAITQEILEVVGGASV.

Belongs to the ATPase gamma chain family. In terms of assembly, F-type ATPases have 2 components, CF(1) - the catalytic core - and CF(0) - the membrane proton channel. CF(1) has five subunits: alpha(3), beta(3), gamma(1), delta(1), epsilon(1). CF(0) has three main subunits: a, b and c.

It localises to the cellular thylakoid membrane. Functionally, produces ATP from ADP in the presence of a proton gradient across the membrane. The gamma chain is believed to be important in regulating ATPase activity and the flow of protons through the CF(0) complex. This chain is ATP synthase gamma chain, found in Prochlorococcus marinus (strain SARG / CCMP1375 / SS120).